A 220-amino-acid polypeptide reads, in one-letter code: Peptide methionine sulfoxide reductase MsrA (220 aa).

Residue C54 is part of the active site.

This sequence belongs to the MsrA Met sulfoxide reductase family.

The enzyme catalyses L-methionyl-[protein] + [thioredoxin]-disulfide + H2O = L-methionyl-(S)-S-oxide-[protein] + [thioredoxin]-dithiol. The catalysed reaction is [thioredoxin]-disulfide + L-methionine + H2O = L-methionine (S)-S-oxide + [thioredoxin]-dithiol. In terms of biological role, has an important function as a repair enzyme for proteins that have been inactivated by oxidation. Catalyzes the reversible oxidation-reduction of methionine sulfoxide in proteins to methionine. This is Peptide methionine sulfoxide reductase MsrA from Salinispora tropica (strain ATCC BAA-916 / DSM 44818 / JCM 13857 / NBRC 105044 / CNB-440).